The following is an 803-amino-acid chain: MLQNVTPHNKLPGEGNAGLLGLGPEAAAPGKRIRKPSLLYEGFESPTMASVPALQLTPANPPPPEVSNPKKPGRVTNQLQYLHKVVMKALWKHQFAWPFRQPVDAVKLGLPDYHKIIKQPMDMGTIKRRLENNYYWAASECMQDFNTMFTNCYIYNKPTDDIVLMAQTLEKIFLQKVASMPQEEQELVVTIPKNSHKKGAKLAALQGSITSAHQVPAVSSVSHTALYTPPPEIPTTVLNIPHPSVISSPLLKSLHSAGPPLLAVSAAPPAQPLAKKKGVKRKADTTTPTPTAILAPGSPASPPGGLEPKAARLPPVRRESGRPIKPPRKDLPDSQQQHQSSKKGKLSEQLKHCNGILKELLSKKHAAYAWPFYKPVDASALGLHDYHDIIKHPMDLSTVKRKMENRDYRDAQEFAADVRLMFSNCYKYNPPDHDVVAMARKLQDVFEFRYAKMPDEPLEPGPLPVSTALPPGLAKSSSESSSEESSSESSSEEEEEEDEDEEEEEEESESSDSEEERAHRLAELQEQLRAVHEQLAALSQGPISKPKRKREKKEKKKKRKAEKHRGRAGADEDDKGPRAPRPSQPKKSKKAGGGGSSGAATLGPPGFGPSGGGATKLPKKATKTAPPALPAGYDSEEEEESRPMSYDEKRQLSLDINKLPGEKLGRVVHIIQAREPSLRDSNPEEIEIDFETLKPSTLRELERYVLSCLRKKPRKPYTIKKPVGKTKEELALEKKRELEKRLQDVSGQLNSTKKPPKKASEKTETSSAQQVAVSRLSASSSSSDSSSSSSSSSSSDTSDSDSG.

The residue at position 1 (Met-1) is an N-acetylmethionine. Thr-6 is modified (phosphothreonine). A Phosphoserine modification is found at Ser-37. The segment at 53–73 (ALQLTPANPPPPEVSNPKKPG) is disordered. The 107-residue stretch at 74–180 (RVTNQLQYLH…KIFLQKVASM (107 aa)) folds into the Bromo 1 domain. Residues Asp-112, Tyr-155, Asn-156, Lys-157, Asp-160, and Asp-161 each contribute to the a protein site. 3 disordered regions span residues 268–348 (PPAQ…KLSE), 456–652 (EPLE…KRQL), and 739–803 (EKRL…SDSG). Residues 285 to 298 (TTTPTPTAILAPGS) show a composition bias toward low complexity. Phosphoserine occurs at positions 298 and 301. The span at 316–332 (VRRESGRPIKPPRKDLP) shows a compositional bias: basic and acidic residues. A Bromo 2 domain is found at 344-453 (GKLSEQLKHC…DVFEFRYAKM (110 aa)). The segment covering 481 to 515 (SSEESSSESSSEEEEEEDEDEEEEEEESESSDSEE) has biased composition (acidic residues). Positions 545–567 (KPKRKREKKEKKKKRKAEKHRGR) are enriched in basic residues. A Nuclear localization signal motif is present at residues 556–560 (KKKRK). Low complexity predominate over residues 623–632 (KTAPPALPAG). The region spanning 634 to 716 (DSEEEEESRP…SCLRKKPRKP (83 aa)) is the NET domain. A Phosphoserine modification is found at Ser-635. Residues 641–652 (SRPMSYDEKRQL) show a composition bias toward basic and acidic residues. Low complexity predominate over residues 777 to 797 (SASSSSSDSSSSSSSSSSSDT).

Belongs to the BET family. In terms of assembly, homodimer. Interacts with E2F1. Interacts with (acetylated) STAT3; promoting STAT3 recruitment to chromatin. Interacts with CTCF; promoting BRD2 recruitment to chromatin.

The protein localises to the nucleus. It is found in the chromosome. Its function is as follows. Chromatin reader protein that specifically recognizes and binds histone H4 acetylated at 'Lys-5' and 'Lys-12' (H4K5ac and H4K12ac, respectively), thereby controlling gene expression and remodeling chromatin structures. Recruits transcription factors and coactivators to target gene sites, and activates RNA polymerase II machinery for transcriptional elongation. Plays a key role in genome compartmentalization via its association with CTCF and cohesin: recruited to chromatin by CTCF and promotes formation of topologically associating domains (TADs) via its ability to bind acetylated histones, contributing to CTCF boundary formation and enhancer insulation. Also recognizes and binds acetylated non-histone proteins, such as STAT3. Involved in inflammatory response by regulating differentiation of naive CD4(+) T-cells into T-helper Th17: recognizes and binds STAT3 acetylated at 'Lys-87', promoting STAT3 recruitment to chromatin. In addition to acetylated lysines, also recognizes and binds lysine residues on histones that are both methylated and acetylated on the same side chain to form N6-acetyl-N6-methyllysine (Kacme), an epigenetic mark of active chromatin associated with increased transcriptional initiation. Specifically binds histone H4 acetyl-methylated at 'Lys-5' and 'Lys-12' (H4K5acme and H4K12acme, respectively). The sequence is that of Bromodomain-containing protein 2 (BRD2) from Bos taurus (Bovine).